Consider the following 164-residue polypeptide: 2-keto-3-deoxy-D-glycero-D-galacto-9-phosphonononic acid phosphatase (164 aa).

Positions 10 and 12 each coordinate Mg(2+). Residues T34, 54–56 (TGE), 64–67 (RAEK), and K80 each bind substrate. A Mg(2+)-binding site is contributed by D103. N106 is a substrate binding site.

The protein belongs to the KdsC family. In terms of assembly, homotetramer. Requires Mg(2+) as cofactor.

It carries out the reaction 3-deoxy-D-glycero-beta-D-galacto-non-2-ulopyranosonate 9-phosphate + H2O = 3-deoxy-D-glycero-beta-D-galacto-non-2-ulopyranosonate + phosphate. Involved in the biosynthesis of 2-keto-3-deoxy-D-glycero-D-galacto-nononic acid used in cell-wall polysaccharides. Catalyzes the hydrolysis of 2-keto-3-deoxy-D-glycero-D-galacto-9-phosphonononic acid (KDN-9-P) to yield 2-keto-3-deoxy-D-glycero-D-galacto-nononic acid (KDN). Also able to hydrolyze N-acetylneuraminate-9-phosphate (Neu5NAc-9-P), 2-keto-3-deoxy-D-manno-octulosonate-8-phosphate (KDO-8-P), phosphoenolpyruvate (PEP), gluconate 6-phosphate, tyrosine phosphate ester and glucose-6-P as substrate. This Bacteroides thetaiotaomicron (strain ATCC 29148 / DSM 2079 / JCM 5827 / CCUG 10774 / NCTC 10582 / VPI-5482 / E50) protein is 2-keto-3-deoxy-D-glycero-D-galacto-9-phosphonononic acid phosphatase.